Reading from the N-terminus, the 837-residue chain is Dapper homolog 2 (837 aa).

Residues 65 to 113 (ENVSKEELRLEATLSLLKQQLTRLRRQDVGLKTHLQQLDQQITELKLDV) are a coiled coil. 5 disordered regions span residues 189-265 (ADES…PKYQ), 424-497 (HGKH…DKSS), 512-564 (GSQR…KQSG), 600-649 (QQIP…HTQR), and 738-782 (EMSD…EDEG). 2 stretches are compositionally biased toward polar residues: residues 246 to 265 (VKSS…PKYQ) and 432 to 445 (LDLQ…NNTA). Basic and acidic residues-rich tracts occupy residues 456–466 (ASEKRSGHFPK), 486–496 (EGSRASCHDKS), and 548–560 (LSRE…RTDL). Residues 741–759 (DYTTNRFGDSESSQGSQTA) are compositionally biased toward polar residues. The span at 768 to 782 (LDEEDLLEEEEEDEG) shows a compositional bias: acidic residues. The short motif at 834 to 837 (MTLV) is the PDZ-binding element.

It belongs to the dapper family. Interacts with dvl2.

Its subcellular location is the cytoplasm. The protein resides in the late endosome. It localises to the nucleus. It is found in the cell membrane. Functionally, involved in regulation of intracellular signaling pathways during development. Specifically thought to play a role in canonical and/or non-canonical Wnt signaling pathways through interaction with DSH (Dishevelled) family proteins. Positive regulator of the Wnt signaling pathway which acts downstream of wnt1 indicative for non-canonical Wnt signaling. Also negatively regulates the Nodal signaling pathway, possibly by promoting the lysosomal degradation of Nodal receptors. Required for convergent extension movements in gastrulation. This Danio rerio (Zebrafish) protein is Dapper homolog 2 (dact2).